The sequence spans 448 residues: T-box transcription factor TBX19 (448 aa).

The segment at residues 45–218 (LEDAPLWQRF…YNPFAKAFLD (174 aa)) is a DNA-binding region (T-box).

The protein localises to the nucleus. Transcriptional regulator involved in developmental processes. Can activate POMC gene expression and repress the alpha glycoprotein subunit and thyroid-stimulating hormone beta promoters. In Homo sapiens (Human), this protein is T-box transcription factor TBX19.